Here is a 201-residue protein sequence, read N- to C-terminus: FMN-dependent NADH:quinone oxidoreductase (201 aa).

FMN is bound by residues Ser10, 16–18 (SQS), 96–99 (MYNF), and 140–143 (SRGG).

This sequence belongs to the azoreductase type 1 family. Homodimer. FMN is required as a cofactor.

The enzyme catalyses 2 a quinone + NADH + H(+) = 2 a 1,4-benzosemiquinone + NAD(+). The catalysed reaction is N,N-dimethyl-1,4-phenylenediamine + anthranilate + 2 NAD(+) = 2-(4-dimethylaminophenyl)diazenylbenzoate + 2 NADH + 2 H(+). In terms of biological role, quinone reductase that provides resistance to thiol-specific stress caused by electrophilic quinones. Functionally, also exhibits azoreductase activity. Catalyzes the reductive cleavage of the azo bond in aromatic azo compounds to the corresponding amines. The chain is FMN-dependent NADH:quinone oxidoreductase from Escherichia coli O9:H4 (strain HS).